Here is a 335-residue protein sequence, read N- to C-terminus: MATFVSELEAAKKNLSEALGDNVKQYWANLKLWFKQKISKEEFDLEAHRLLTQDNVHSHNDFLLAILTRCQILVSTPEGAGSLPWTGGSAAKPGKPKGKKKLSSVRQKFDHRFQPQNPLSGAQQFVAKDPQDDDDLKLCSHTMMLPTRGQLEGRMIVTAYEHGLDNVTEEAVSAVVYAVENHLKDILSSVVSRRKAYRLRDGHFKYAFGSNVTPQPYLKNSVVAYNSLIESPPALSAPFAGQNPASHPPPDDAEQQAALLLACSGDTLPASLPPVNMYDLFEALQVHREVIPTHTVYALNIERIIMKLWHPNHEELQQDKVHRQRLAAKEGLLFC.

It belongs to the TADA1 family. In terms of assembly, component of the STAGA transcription coactivator-HAT complex, at least composed of SUPT3H, GCN5L2, TAF5L, TAF6L, SUPT7L, TADA3L, TAD1L, TAF10, TAF12, TRRAP and TAF9.

It localises to the nucleus. Functionally, probably involved in transcriptional regulation. This is Transcriptional adapter 1 (TADA1) from Bos taurus (Bovine).